Consider the following 305-residue polypeptide: Aspartate carbamoyltransferase catalytic subunit (305 aa).

2 residues coordinate carbamoyl phosphate: Arg-52 and Thr-53. Residue Lys-80 participates in L-aspartate binding. Positions 102, 132, and 135 each coordinate carbamoyl phosphate. 2 residues coordinate L-aspartate: Arg-165 and Arg-217. Residues Ala-258 and Pro-259 each contribute to the carbamoyl phosphate site.

It belongs to the aspartate/ornithine carbamoyltransferase superfamily. ATCase family. Heterododecamer (2C3:3R2) of six catalytic PyrB chains organized as two trimers (C3), and six regulatory PyrI chains organized as three dimers (R2).

The enzyme catalyses carbamoyl phosphate + L-aspartate = N-carbamoyl-L-aspartate + phosphate + H(+). The protein operates within pyrimidine metabolism; UMP biosynthesis via de novo pathway; (S)-dihydroorotate from bicarbonate: step 2/3. Functionally, catalyzes the condensation of carbamoyl phosphate and aspartate to form carbamoyl aspartate and inorganic phosphate, the committed step in the de novo pyrimidine nucleotide biosynthesis pathway. This chain is Aspartate carbamoyltransferase catalytic subunit, found in Latilactobacillus sakei subsp. sakei (strain 23K) (Lactobacillus sakei subsp. sakei).